The following is a 265-amino-acid chain: HUWE1-associated protein modifying stress responses (265 aa).

Disordered stretches follow at residues 1-22 (MEDKKEEGESEIQEHGPEHWFS), 145-170 (RNSRAPPRLTVVSPNRATPTETGSSV), 195-218 (VRSSTPGSPTHVSGSSNTGRRRNG), and 240-265 (GTRKRSSAQCGDVITDSPTHKRNRMI). 2 stretches are compositionally biased toward polar residues: residues 156 to 170 (VSPNRATPTETGSSV) and 195 to 212 (VRSSTPGSPTHVSGSSNT).

Belongs to the TAPR1 family. As to quaternary structure, oligomer.

Its subcellular location is the nucleus. The protein resides in the cytoplasm. Acts as a central player within a network of stress response pathways promoting cellular adaptability. Functions as a negative regulator of TP53/P53 in the cellular response to telomere erosion and probably also DNA damage. The chain is HUWE1-associated protein modifying stress responses from Xenopus laevis (African clawed frog).